A 396-amino-acid chain; its full sequence is Schizokinen exporter SchE (396 aa).

An N-terminal signal peptide occupies residues 1–25; sequence MLPKLILLATLYISQFIPTTFFIQA. Over 26 to 39 the chain is Cytoplasmic; it reads LPVFMRQQKMSLDV. The chain crosses the membrane as a helical span at residues 40-60; that stretch reads IGFLGLLILPSGLKFLWSPFI. At 61 to 73 the chain is on the periplasmic side; it reads DRYRLGKLGHYRG. The chain crosses the membrane as a helical span at residues 74 to 94; sequence WIICFQLLLISTMLVTAFIDI. At 95–104 the chain is on the cytoplasmic side; the sequence is QDNLNAFLTC. Residues 105–127 form a helical membrane-spanning segment; that stretch reads MFLASLFSSSQDIATDALAVNLL. Topologically, residues 128 to 137 are periplasmic; the sequence is EPQERGLGNA. The helical transmembrane segment at 138 to 158 threads the bilayer; it reads IQSGGNIFGAIIGGGVMLILL. Residues 159–162 are Cytoplasmic-facing; sequence DKIG. A helical transmembrane segment spans residues 163-183; it reads WRYSLITLSIFMLINLVPILI. The Periplasmic segment spans residues 184-214; it reads YREKSQHQLENSTFFRSYFQPFISFLSRPKA. The helical transmembrane segment at 215 to 235 threads the bilayer; the sequence is LPWLFVVLLYMMGDSVTSLMI. Residues 236-251 are Cytoplasmic-facing; that stretch reads RPLLVDRGLSLPDIGW. A helical transmembrane segment spans residues 252–272; the sequence is ILGIVSYSARIVSALIAGLVI. Residues 273–281 lie on the Periplasmic side of the membrane; that stretch reads VKLGRIKSL. The chain crosses the membrane as a helical span at residues 282-302; that stretch reads IIFGFIADLTTLLYIIPAIGV. The Cytoplasmic segment spans residues 303 to 304; sequence SS. The helical transmembrane segment at 305-325 threads the bilayer; sequence LLVLYTVCIIVNATQSMAYTA. The Periplasmic segment spans residues 326 to 346; it reads LLSAMMDKCEKNTAATDYTMQ. Helical transmembrane passes span 347–367 and 368–388; these read VSVMFLGGIAATVLSGMLATT and MGYSFIFIMSAAVSLLSVFLI. Residues 389–396 are Periplasmic-facing; that stretch reads TQEYGVSS.

It belongs to the major facilitator superfamily.

The protein resides in the cell inner membrane. Its function is as follows. Involved in the TolC-like protein HgdD-dependent secretion of schizokinen, a dihydroxamate-type siderophore. Transports schizokinen from the cytoplasm to the periplasm. The polypeptide is Schizokinen exporter SchE (Nostoc sp. (strain PCC 7120 / SAG 25.82 / UTEX 2576)).